The chain runs to 230 residues: MLAKVEPKRQLARFRGRSYVAFVFAPVVPIADWLEEIDSTIERSSGFFVGRPVVLDLSAVDLSCSGITHLLSSLEARNIRVLGIEGVNGSQLTPSMPPLLTGGRHCVLEHIETDKAEAKPRASSLLLKQPVRSGQSVVFTEGDVTVLGSVGSGAEIVAGGSIHIYGTLRGRAMAGVNGNLDARIYCQKIEAELLAIDGYYQTAENIDSTLRSRPVQAWLDDETLKITPLI.

This sequence belongs to the MinC family. As to quaternary structure, interacts with MinD and FtsZ.

Functionally, cell division inhibitor that blocks the formation of polar Z ring septums. Rapidly oscillates between the poles of the cell to destabilize FtsZ filaments that have formed before they mature into polar Z rings. Prevents FtsZ polymerization. This chain is Probable septum site-determining protein MinC, found in Rhodopseudomonas palustris (strain BisA53).